The following is a 102-amino-acid chain: Small ribosomal subunit protein uS10 (102 aa).

Positions 34–58 (LSGPVPLPTKTLEIPARKSPDGEGT) are disordered.

This sequence belongs to the universal ribosomal protein uS10 family. In terms of assembly, part of the 30S ribosomal subunit.

Its function is as follows. Involved in the binding of tRNA to the ribosomes. The sequence is that of Small ribosomal subunit protein uS10 from Natronomonas pharaonis (strain ATCC 35678 / DSM 2160 / CIP 103997 / JCM 8858 / NBRC 14720 / NCIMB 2260 / Gabara) (Halobacterium pharaonis).